The primary structure comprises 367 residues: tRNA pseudouridine synthase D (367 aa).

The active-site Nucleophile is D78. A TRUD domain is found at 153–300; it reads GVPNYFGEQR…KQERRRIRLT (148 aa).

This sequence belongs to the pseudouridine synthase TruD family.

It catalyses the reaction uridine(13) in tRNA = pseudouridine(13) in tRNA. Responsible for synthesis of pseudouridine from uracil-13 in transfer RNAs. The polypeptide is tRNA pseudouridine synthase D (Colwellia psychrerythraea (strain 34H / ATCC BAA-681) (Vibrio psychroerythus)).